The chain runs to 576 residues: Cilia- and flagella-associated protein 100 (576 aa).

The tract at residues 1–29 (MPIYDEASVPGTAAGRSTTDVGATAGANP) is disordered. Coiled-coil stretches lie at residues 125–226 (IFLL…CRRY), 254–311 (VAEW…IMKE), and 342–408 (YKQL…LKDR). Disordered stretches follow at residues 417–439 (TLSM…PGGP), 495–519 (AEKA…HREH), and 538–563 (TGKP…RNDE).

The protein belongs to the CFAP100 family. As to quaternary structure, interacts with FAP73; form the modifier of inner arm (MIA) complex.

The protein localises to the cytoplasm. Its subcellular location is the cytoskeleton. It localises to the flagellum axoneme. Functionally, as part of MIA, a complex associated with the outer doublet microtubules of the axoneme, may play a role in ciliary/flagellar motility by regulating the assembly and the activity of axonemal inner dynein arm. This Chlamydomonas reinhardtii (Chlamydomonas smithii) protein is Cilia- and flagella-associated protein 100.